The sequence spans 248 residues: Eukaryotic translation initiation factor 6 (248 aa).

Belongs to the eIF-6 family. As to quaternary structure, monomer. Associates with the 60S ribosomal subunit.

It localises to the cytoplasm. Its subcellular location is the nucleus. The protein localises to the nucleolus. Binds to the 60S ribosomal subunit and prevents its association with the 40S ribosomal subunit to form the 80S initiation complex in the cytoplasm. May also be involved in ribosome biogenesis. In Trypanosoma cruzi (strain CL Brener), this protein is Eukaryotic translation initiation factor 6.